The following is a 218-amino-acid chain: Large ribosomal subunit protein eL13 (218 aa).

The segment at 196 to 218 (AKRAKEAAESEDAAKGDPKKAKK) is disordered. Positions 199–218 (AKEAAESEDAAKGDPKKAKK) are enriched in basic and acidic residues.

Belongs to the eukaryotic ribosomal protein eL13 family. As to quaternary structure, component of the 60S large ribosomal subunit (LSU).

Its subcellular location is the cytoplasm. Functionally, component of the ribosome, a large ribonucleoprotein complex responsible for the synthesis of proteins in the cell. The small ribosomal subunit (SSU) binds messenger RNAs (mRNAs) and translates the encoded message by selecting cognate aminoacyl-transfer RNA (tRNA) molecules. The large subunit (LSU) contains the ribosomal catalytic site termed the peptidyl transferase center (PTC), which catalyzes the formation of peptide bonds, thereby polymerizing the amino acids delivered by tRNAs into a polypeptide chain. The nascent polypeptides leave the ribosome through a tunnel in the LSU and interact with protein factors that function in enzymatic processing, targeting, and the membrane insertion of nascent chains at the exit of the ribosomal tunnel. As part of the LSU, it is probably required for its formation and the maturation of rRNAs. In Drosophila melanogaster (Fruit fly), this protein is Large ribosomal subunit protein eL13 (RpL13).